The primary structure comprises 426 residues: Methionine aminopeptidase 2 (426 aa).

Residues 1–72 (MTSATTTEAT…QEQTNPPTVG (72 aa)) are disordered. Basic and acidic residues predominate over residues 10–34 (TAKDLQEKLSLKENDVVEDDGKVEE). Basic residues predominate over residues 47–60 (KKKKKKKKSSKKKK). Residue H179 participates in substrate binding. Positions 199, 210, and 279 each coordinate a divalent metal cation. H287 lines the substrate pocket. A divalent metal cation-binding residues include E312 and E407.

It belongs to the peptidase M24A family. Methionine aminopeptidase eukaryotic type 2 subfamily. Co(2+) serves as cofactor. It depends on Zn(2+) as a cofactor. Requires Mn(2+) as cofactor. The cofactor is Fe(2+).

The protein resides in the cytoplasm. The enzyme catalyses Release of N-terminal amino acids, preferentially methionine, from peptides and arylamides.. Cotranslationally removes the N-terminal methionine from nascent proteins. The N-terminal methionine is often cleaved when the second residue in the primary sequence is small and uncharged (Met-Ala-, Cys, Gly, Pro, Ser, Thr, or Val). The sequence is that of Methionine aminopeptidase 2 (fma2) from Schizosaccharomyces pombe (strain 972 / ATCC 24843) (Fission yeast).